The primary structure comprises 185 residues: Large ribosomal subunit protein uL5 (185 aa).

It belongs to the universal ribosomal protein uL5 family. Part of the 50S ribosomal subunit; part of the 5S rRNA/L5/L18/L25 subcomplex. Contacts the 5S rRNA and the P site tRNA. Forms a bridge to the 30S subunit in the 70S ribosome.

This is one of the proteins that bind and probably mediate the attachment of the 5S RNA into the large ribosomal subunit, where it forms part of the central protuberance. In the 70S ribosome it contacts protein S13 of the 30S subunit (bridge B1b), connecting the 2 subunits; this bridge is implicated in subunit movement. Contacts the P site tRNA; the 5S rRNA and some of its associated proteins might help stabilize positioning of ribosome-bound tRNAs. The sequence is that of Large ribosomal subunit protein uL5 from Streptomyces coelicolor (strain ATCC BAA-471 / A3(2) / M145).